The sequence spans 313 residues: Foldase protein PrsA (313 aa).

An N-terminal signal peptide occupies residues 1–20 (MKKKLLAGAITLLSVATLAA). Residue Cys-21 is the site of N-palmitoyl cysteine attachment. Cys-21 carries the S-diacylglycerol cysteine lipid modification. One can recognise a PpiC domain in the interval 143–241 (TPDVTAQIIR…SQYYIVKLTK (99 aa)).

The protein belongs to the PrsA family.

The protein localises to the cell membrane. It catalyses the reaction [protein]-peptidylproline (omega=180) = [protein]-peptidylproline (omega=0). Functionally, plays a major role in protein secretion by helping the post-translocational extracellular folding of several secreted proteins. This Streptococcus pneumoniae (strain ATCC BAA-255 / R6) protein is Foldase protein PrsA.